Reading from the N-terminus, the 285-residue chain is MMKMSIGTTTSGDGEMELRPGGMVVQKRTDHSSSVPRGIRVRVKYGSVHHEISINSQSTFGELKKILSGATGVHHQDMQIIYKDKERDSKMFLDLSGVKDRSKLILIEDPISQEKRLLELRKIATKEKSSKAISDISFQVERLAGQLSAFDTVIGKGGKVEEKNLENLMEMLMNQLVKLDAISGDGDVKLKKKMQEERLHKYVEALDLLKIKNSRQPQTKPKPQYKEREMLTFYEEASRKPTASSSSPPVIITTRWETFDSSSASTATLQPVRPVHPKFKWELFN.

Positions arginine 37 to glutamine 113 constitute a Ubiquitin-like domain. One can recognise a BAG domain in the interval alanine 132–lysine 210. Residue serine 244 is modified to Phosphoserine.

In terms of assembly, binds to the ATPase domain of HSP70/HSC70 chaperones.

In terms of biological role, co-chaperone that regulates diverse cellular pathways, such as programmed cell death and stress responses. This Arabidopsis thaliana (Mouse-ear cress) protein is BAG family molecular chaperone regulator 2 (BAG2).